A 130-amino-acid polypeptide reads, in one-letter code: Fumarate reductase subunit C (130 aa).

The next 3 helical transmembrane spans lie at 34–54 (VPAV…KGGV), 60–80 (FVGF…LLAA), and 109–129 (IVKT…AVAL).

It belongs to the FrdC family. As to quaternary structure, part of an enzyme complex containing four subunits: a flavoprotein (FrdA), an iron-sulfur protein (FrdB), and two hydrophobic anchor proteins (FrdC and FrdD).

The protein localises to the cell inner membrane. Its function is as follows. Two distinct, membrane-bound, FAD-containing enzymes are responsible for the catalysis of fumarate and succinate interconversion; fumarate reductase is used in anaerobic growth, and succinate dehydrogenase is used in aerobic growth. Anchors the catalytic components of the fumarate reductase complex to the cell inner membrane, binds quinones. The polypeptide is Fumarate reductase subunit C (Serratia proteamaculans (strain 568)).